Consider the following 247-residue polypeptide: Cytochrome c oxidase subunit 2 (247 aa).

The Mitochondrial intermembrane portion of the chain corresponds to 1–38 (MKEMMMSNMFNDVPTPWAMFFQDSATPNMEGMLELHNN). A helical membrane pass occupies residues 39–58 (VVFYLCMMLGFVTFMLYNML). Topologically, residues 59–78 (TTYNKSVMPYKYLNQGQFME) are mitochondrial matrix. Residues 79 to 103 (MMWTTLPAVMLLMIAFPSFILLYMC) form a helical membrane-spanning segment. Residues 104–247 (DEVMAPAMTI…ADFLAWIDEQ (144 aa)) are Mitochondrial intermembrane-facing. Cu cation contacts are provided by histidine 182, cysteine 217, glutamate 219, cysteine 221, histidine 225, and methionine 228. Glutamate 219 lines the Mg(2+) pocket.

Belongs to the cytochrome c oxidase subunit 2 family. As to quaternary structure, component of the cytochrome c oxidase (complex IV, CIV), a multisubunit enzyme composed of a catalytic core of 3 subunits and several supernumerary subunits. The complex exists as a monomer or a dimer and forms supercomplexes (SCs) in the inner mitochondrial membrane with ubiquinol-cytochrome c oxidoreductase (cytochrome b-c1 complex, complex III, CIII). Cu cation serves as cofactor.

The protein resides in the mitochondrion inner membrane. It carries out the reaction 4 Fe(II)-[cytochrome c] + O2 + 8 H(+)(in) = 4 Fe(III)-[cytochrome c] + 2 H2O + 4 H(+)(out). In terms of biological role, component of the cytochrome c oxidase, the last enzyme in the mitochondrial electron transport chain which drives oxidative phosphorylation. The respiratory chain contains 3 multisubunit complexes succinate dehydrogenase (complex II, CII), ubiquinol-cytochrome c oxidoreductase (cytochrome b-c1 complex, complex III, CIII) and cytochrome c oxidase (complex IV, CIV), that cooperate to transfer electrons derived from NADH and succinate to molecular oxygen, creating an electrochemical gradient over the inner membrane that drives transmembrane transport and the ATP synthase. Cytochrome c oxidase is the component of the respiratory chain that catalyzes the reduction of oxygen to water. Electrons originating from reduced cytochrome c in the intermembrane space (IMS) are transferred via the dinuclear copper A center (CU(A)) of subunit 2 and heme A of subunit 1 to the active site in subunit 1, a binuclear center (BNC) formed by heme A3 and copper B (CU(B)). The BNC reduces molecular oxygen to 2 water molecules using 4 electrons from cytochrome c in the IMS and 4 protons from the mitochondrial matrix. The chain is Cytochrome c oxidase subunit 2 (COX2) from Brettanomyces custersianus (Yeast).